The following is a 907-amino-acid chain: Coatomer subunit beta'-1 (907 aa).

WD repeat units lie at residues 13 to 52, 55 to 94, 97 to 136, 140 to 180, 183 to 224, 227 to 266, 269 to 309, 351 to 389, and 461 to 501; these read QRSE…MVKS, VSEL…KVKV, AHTD…MCTQ, GHSH…PNFT, GHQK…CVQT, GHTH…LENT, YGLE…ASMD, SCDL…NRSF, and RIDV…SYLE. Composition is skewed to acidic residues over residues 850–866 and 874–887; these read ETED…EEVL and STDE…DEPE. A disordered region spans residues 850–887; the sequence is ETEDALDENGEPDEEVLEENKVEESTDEAVEVDADEPE.

It belongs to the WD repeat COPB2 family. As to quaternary structure, oligomeric complex that consists of at least the alpha, beta, beta', gamma, delta, epsilon and zeta subunits.

It is found in the cytoplasm. Its subcellular location is the golgi apparatus membrane. The protein localises to the cytoplasmic vesicle. The protein resides in the COPI-coated vesicle membrane. Functionally, the coatomer is a cytosolic protein complex that binds to dilysine motifs and reversibly associates with Golgi non-clathrin-coated vesicles, which further mediate biosynthetic protein transport from the ER, via the Golgi up to the trans Golgi network. Coatomer complex is required for budding from Golgi membranes, and is essential for the retrograde Golgi-to-ER transport of dilysine-tagged proteins. The polypeptide is Coatomer subunit beta'-1 (Oryza sativa subsp. japonica (Rice)).